The sequence spans 490 residues: (21S)-21-acetyl-1-hydroxy-apo-melianone synthase CYP88A164 (490 aa).

A helical membrane pass occupies residues 4–24 (DLLWLILAIVVGTYVVLFGFL). Residue Cys-438 participates in heme binding.

The protein belongs to the cytochrome P450 family. Requires heme as cofactor. As to expression, mainly expressed in petioles and, to a lower extent, in roots.

It localises to the membrane. It catalyses the reaction (21S)-21-acetoxyl-apo-melianone + reduced [NADPH--hemoprotein reductase] + O2 = (21S)-21-acetyl-1-hydroxy-apo-melianone + oxidized [NADPH--hemoprotein reductase] + H2O + H(+). Its pathway is secondary metabolite biosynthesis; terpenoid biosynthesis. In terms of biological role, monooxygenase involved in the biosynthesis of limonoids triterpene natural products such as azadirachtin, an antifeedant widely used as bioinsecticide, and possessing many medicinal applications including anti-tumoral, anti-malarial, anti-rheumatic, antibacterial, anti-inflammatory, anti-pyretic and diuretic effects. Catalyzes the conversion of (21S)-21-acetoxyl-apo-melianone to (21S)-21-acetyl-1-hydroxy-apo-melianone. This Melia azedarach (Chinaberry tree) protein is (21S)-21-acetyl-1-hydroxy-apo-melianone synthase CYP88A164.